The sequence spans 357 residues: Sulfate/thiosulfate import ATP-binding protein CysA (357 aa).

The 235-residue stretch at 3 to 237 folds into the ABC transporter domain; that stretch reads IQIQGVSKQY…PASPFVYDFL (235 aa). 35 to 42 is an ATP binding site; that stretch reads GPSGSGKT.

This sequence belongs to the ABC transporter superfamily. Sulfate/tungstate importer (TC 3.A.1.6) family. In terms of assembly, the complex is composed of two ATP-binding proteins (CysA), two transmembrane proteins (CysT and CysW) and a solute-binding protein (CysP).

Its subcellular location is the cell membrane. It carries out the reaction sulfate(out) + ATP + H2O = sulfate(in) + ADP + phosphate + H(+). It catalyses the reaction thiosulfate(out) + ATP + H2O = thiosulfate(in) + ADP + phosphate + H(+). Functionally, part of the ABC transporter complex CysAWTP involved in sulfate/thiosulfate import. Responsible for energy coupling to the transport system. This chain is Sulfate/thiosulfate import ATP-binding protein CysA, found in Bacillus cereus (strain ATCC 14579 / DSM 31 / CCUG 7414 / JCM 2152 / NBRC 15305 / NCIMB 9373 / NCTC 2599 / NRRL B-3711).